The sequence spans 305 residues: Glycine--tRNA ligase alpha subunit (305 aa).

Belongs to the class-II aminoacyl-tRNA synthetase family. As to quaternary structure, tetramer of two alpha and two beta subunits.

It localises to the cytoplasm. It catalyses the reaction tRNA(Gly) + glycine + ATP = glycyl-tRNA(Gly) + AMP + diphosphate. The sequence is that of Glycine--tRNA ligase alpha subunit from Streptococcus sanguinis (strain SK36).